The following is a 390-amino-acid chain: NADH-quinone oxidoreductase subunit D (390 aa).

The protein belongs to the complex I 49 kDa subunit family. NDH-1 is composed of 14 different subunits. Subunits NuoB, C, D, E, F, and G constitute the peripheral sector of the complex.

The protein localises to the cell inner membrane. The enzyme catalyses a quinone + NADH + 5 H(+)(in) = a quinol + NAD(+) + 4 H(+)(out). NDH-1 shuttles electrons from NADH, via FMN and iron-sulfur (Fe-S) centers, to quinones in the respiratory chain. The immediate electron acceptor for the enzyme in this species is believed to be ubiquinone. Couples the redox reaction to proton translocation (for every two electrons transferred, four hydrogen ions are translocated across the cytoplasmic membrane), and thus conserves the redox energy in a proton gradient. In Trichlorobacter lovleyi (strain ATCC BAA-1151 / DSM 17278 / SZ) (Geobacter lovleyi), this protein is NADH-quinone oxidoreductase subunit D.